The primary structure comprises 740 residues: MSFNDDDDGMLLNFTTDVSDASETVSRGKITGGKWKDRRKAKMMMEGRKPRVRGEKRPLESDGAPTFEELEASSSNSTSAQAPVEPKRSRFDNSSNVEQPARVTQPLQLNSQIVSSLFTSSRNIDTVTNSNAHDEKAEVTYSNAPLVGDTFDSFGITDTMVSHLNVKMKISKPTKIQKLVIPPFLQAQNDLFIHAQTGSGKTLAFLLPIFQSILSLGQNITRQSGCFALVVTPTRELANQIYQVTSELAQCCHFLVPCLLIGGERKKSEKARLRKGANFIIGTPGRVLDHLQNTKVIKEQLAPSLRYVVLDEGDKLMELGFEETLKEILNIIHGIDIDTHQFPKLPKRILHVLCSATVKGNVTKLGNVTLQNYKLISSGQKQTETTTVPDQLLQKIVIVPPKLRLVTLAGSLTTITQKHYKEGSKSDVTRTIVFLSCSDSVDFHYEVFSSHDGNHRGLVGDTARLLTKGNSILPCFNDTDDPNVICYKLHGSLSQQTRTATLKHFATNNDATKGKHLILFCTDVASRGLDLPHVSTVIEMDPPFAVEDHLHRIGRTARAGCEGESLLFLLPGEEEGYMDYIKPYHPKGWKLLTYDEQVLRPAFEGLNVRRTDKKKEDWDKHEAQAWDNNATTWHLNVERRVIEDSHFKELAVKGYMSHIRAYATHLSIEKKFFNLKCLHLGHLAKSFALRERPKSMGLQQGKAGAAAAASQKKPKEDSKSKMLRMAKMAMRQSNDEFNFA.

The tract at residues 1-104 (MSFNDDDDGM…SNVEQPARVT (104 aa)) is disordered. A compositionally biased stretch (polar residues) spans 13 to 25 (NFTTDVSDASETV). A compositionally biased stretch (basic and acidic residues) spans 43–60 (MMMEGRKPRVRGEKRPLE). Residues 72–81 (ASSSNSTSAQ) are compositionally biased toward polar residues. The short motif at 149–178 (DTFDSFGITDTMVSHLNVKMKISKPTKIQK) is the Q motif element. One can recognise a Helicase ATP-binding domain in the interval 182–376 (PPFLQAQNDL…NVTLQNYKLI (195 aa)). Residue 195-202 (AQTGSGKT) coordinates ATP. The DEAD box signature appears at 311-314 (DEGD). Residues 414 to 607 (TITQKHYKEG…VLRPAFEGLN (194 aa)) enclose the Helicase C-terminal domain. Residues 695–721 (SMGLQQGKAGAAAAASQKKPKEDSKSK) are disordered. Over residues 697-711 (GLQQGKAGAAAAASQ) the composition is skewed to low complexity.

This sequence belongs to the DEAD box helicase family. DDX31/DBP7 subfamily.

Its subcellular location is the nucleus. The protein resides in the nucleolus. It carries out the reaction ATP + H2O = ADP + phosphate + H(+). In terms of biological role, ATP-binding RNA helicase involved in the biogenesis of 60S ribosomal subunits and is required for the normal formation of 25S and 5.8S rRNAs. This chain is ATP-dependent RNA helicase DBP7 (DBP7), found in Kluyveromyces lactis (strain ATCC 8585 / CBS 2359 / DSM 70799 / NBRC 1267 / NRRL Y-1140 / WM37) (Yeast).